We begin with the raw amino-acid sequence, 434 residues long: Trigger factor (434 aa).

Residues 160-245 (GDKAKINFVG…LNEVQAANLP (86 aa)) enclose the PPIase FKBP-type domain.

Belongs to the FKBP-type PPIase family. Tig subfamily.

The protein localises to the cytoplasm. The catalysed reaction is [protein]-peptidylproline (omega=180) = [protein]-peptidylproline (omega=0). Involved in protein export. Acts as a chaperone by maintaining the newly synthesized protein in an open conformation. Functions as a peptidyl-prolyl cis-trans isomerase. This Shewanella halifaxensis (strain HAW-EB4) protein is Trigger factor.